A 184-amino-acid polypeptide reads, in one-letter code: Putative DNA-directed RNA polymerase subunit 454R (184 aa).

Belongs to the archaeal Rpo5/eukaryotic RPB5 RNA polymerase subunit family.

Functionally, component of the DNA-dependent RNA polymerase that catalyzes the transcription in the cytoplasm of viral DNA into RNA using the four ribonucleoside triphosphates as substrates. This Invertebrate iridescent virus 6 (IIV-6) protein is Putative DNA-directed RNA polymerase subunit 454R.